A 391-amino-acid chain; its full sequence is Formate-dependent phosphoribosylglycinamide formyltransferase (391 aa).

Residues 18–19 and Glu-78 contribute to the N(1)-(5-phospho-beta-D-ribosyl)glycinamide site; that span reads EL. Residues Arg-110, Lys-151, 156–161, 191–194, and Glu-199 contribute to the ATP site; these read SSGKGQ and EEFI. The ATP-grasp domain maps to 115 to 305; the sequence is ELVSRDLKIK…EFELHLRAFL (191 aa). Residues Glu-264 and Glu-276 each coordinate Mg(2+). N(1)-(5-phospho-beta-D-ribosyl)glycinamide is bound by residues Asp-283, Lys-353, and 360–361; that span reads RR.

It belongs to the PurK/PurT family. As to quaternary structure, homodimer.

The enzyme catalyses N(1)-(5-phospho-beta-D-ribosyl)glycinamide + formate + ATP = N(2)-formyl-N(1)-(5-phospho-beta-D-ribosyl)glycinamide + ADP + phosphate + H(+). It functions in the pathway purine metabolism; IMP biosynthesis via de novo pathway; N(2)-formyl-N(1)-(5-phospho-D-ribosyl)glycinamide from N(1)-(5-phospho-D-ribosyl)glycinamide (formate route): step 1/1. Involved in the de novo purine biosynthesis. Catalyzes the transfer of formate to 5-phospho-ribosyl-glycinamide (GAR), producing 5-phospho-ribosyl-N-formylglycinamide (FGAR). Formate is provided by PurU via hydrolysis of 10-formyl-tetrahydrofolate. The polypeptide is Formate-dependent phosphoribosylglycinamide formyltransferase (Prochlorococcus marinus (strain MIT 9312)).